The following is a 100-amino-acid chain: Acylphosphatase (100 aa).

In terms of domain architecture, Acylphosphatase-like spans 3 to 92; sequence RRSYSVIGRV…PLPDTFDIRF (90 aa). Residues Arg18 and Asn36 contribute to the active site. The segment at 76 to 100 is disordered; the sequence is DDPAHEGPLPDTFDIRFRAPGSASE.

It belongs to the acylphosphatase family.

The enzyme catalyses an acyl phosphate + H2O = a carboxylate + phosphate + H(+). The sequence is that of Acylphosphatase (acyP) from Nitratidesulfovibrio vulgaris (strain ATCC 29579 / DSM 644 / CCUG 34227 / NCIMB 8303 / VKM B-1760 / Hildenborough) (Desulfovibrio vulgaris).